We begin with the raw amino-acid sequence, 256 residues long: NH(3)-dependent NAD(+) synthetase (256 aa).

29 to 36 (GISGGIDS) contacts ATP. Asp35 contributes to the Mg(2+) binding site. A deamido-NAD(+)-binding site is contributed by Arg115. Residue Thr135 participates in ATP binding. Residue Glu140 participates in Mg(2+) binding. 2 residues coordinate deamido-NAD(+): Lys148 and Asp155. Residues Lys164 and Ser186 each contribute to the ATP site. A deamido-NAD(+)-binding site is contributed by 245–246 (HK).

Belongs to the NAD synthetase family. In terms of assembly, homodimer.

The catalysed reaction is deamido-NAD(+) + NH4(+) + ATP = AMP + diphosphate + NAD(+) + H(+). The protein operates within cofactor biosynthesis; NAD(+) biosynthesis; NAD(+) from deamido-NAD(+) (ammonia route): step 1/1. In terms of biological role, catalyzes the ATP-dependent amidation of deamido-NAD to form NAD. Uses ammonia as a nitrogen source. This Methanosarcina acetivorans (strain ATCC 35395 / DSM 2834 / JCM 12185 / C2A) protein is NH(3)-dependent NAD(+) synthetase.